Consider the following 922-residue polypeptide: Golgi-associated RAB2 interactor protein 5B (922 aa).

6 disordered regions span residues 244–264 (DVRKKPAEKKSHSDPRPDRTH), 292–317 (QSSPKACTSASDEATGQGHVVESPSH), 373–404 (TPYSSIPRGREKAGPMGSHQGPGPPPCQKAPS), 424–597 (AVPA…TQET), 758–830 (QPES…LRPS), and 842–869 (ATARASQQPKRVSQEPMRMPAQHPLATV). The span at 292 to 305 (QSSPKACTSASDEA) shows a compositional bias: polar residues. Residues 431 to 441 (KPPPGLAPPQK) are compositionally biased toward pro residues. Composition is skewed to low complexity over residues 442–458 (APAASAPPRKAPAVPAP) and 471–495 (KAPAIPAPSRKASAASASPRKASAV). A compositionally biased stretch (pro residues) spans 496 to 507 (PAPPQKTPPPSQ). Positions 758 to 788 (QPESHTWVKEGKRPWGEMKEQPWGEMKEPPW) are enriched in basic and acidic residues.

The protein belongs to the GARIN family.

The protein is Golgi-associated RAB2 interactor protein 5B of Homo sapiens (Human).